The chain runs to 79 residues: Small ribosomal subunit protein bS18 (79 aa).

This sequence belongs to the bacterial ribosomal protein bS18 family. In terms of assembly, part of the 30S ribosomal subunit. Forms a tight heterodimer with protein bS6.

In terms of biological role, binds as a heterodimer with protein bS6 to the central domain of the 16S rRNA, where it helps stabilize the platform of the 30S subunit. This is Small ribosomal subunit protein bS18 from Bradyrhizobium sp. (strain BTAi1 / ATCC BAA-1182).